The following is a 98-amino-acid chain: Plastocyanin (98 aa).

The Plastocyanin-like domain maps to 1–98 (AQIVKLGGDD…AGMKMTITVQ (98 aa)). 4 residues coordinate Cu cation: histidine 38, cysteine 83, histidine 86, and methionine 91.

This sequence belongs to the plastocyanin family. The cofactor is Cu(2+).

It is found in the plastid. It localises to the chloroplast thylakoid membrane. Its function is as follows. Participates in electron transfer between P700 and the cytochrome b6-f complex in photosystem I. This chain is Plastocyanin (PETE), found in Ulva arasakii (Sea lettuce).